The primary structure comprises 346 residues: Annexin A1 (346 aa).

At Ser-5 the chain carries Phosphoserine; by TRPM7. Gln-19 is covalently cross-linked (Isoglutamyl lysine isopeptide (Gln-Lys) (interchain with K-?)). A Phosphotyrosine; by EGFR modification is found at Tyr-21. The residue at position 27 (Ser-27) is a Phosphoserine; by PKC. 2 positions are modified to phosphoserine: Ser-34 and Ser-37. Annexin repeat units lie at residues 42–113 (FDAS…ALLK), 114–185 (TPAQ…SLAK), 197–269 (DLAD…AIVK), and 273–344 (STPA…ALCG). The residue at position 58 (Lys-58) is an N6-acetyllysine. Residues Gly-59, Val-60, Glu-62, Lys-97, Leu-100, Glu-105, Met-127, Gly-129, Gly-131, Thr-132, and Glu-134 each coordinate Ca(2+). Thr-136 bears the Phosphothreonine mark. Asp-171, Gly-210, and Arg-213 together coordinate Ca(2+). Residue Lys-214 forms a Glycyl lysine isopeptide (Lys-Gly) (interchain with G-Cter in SUMO1); alternate linkage. A Glycyl lysine isopeptide (Lys-Gly) (interchain with G-Cter in SUMO2); alternate cross-link involves residue Lys-214. Gly-215 lines the Ca(2+) pocket. Lys-239 bears the N6-acetyllysine mark. Ca(2+)-binding residues include Asp-253, Glu-255, and Leu-256. Lys-257 participates in a covalent cross-link: Glycyl lysine isopeptide (Lys-Gly) (interchain with G-Cter in SUMO1). 4 residues coordinate Ca(2+): Glu-261, Met-286, Gly-288, and Gly-290. Lys-312 is modified (N6-acetyllysine). A disulfide bond links Cys-324 and Cys-343. Ca(2+)-binding residues include Leu-328, Glu-330, and Thr-331. A Glycyl lysine isopeptide (Lys-Gly) (interchain with G-Cter in SUMO1) cross-link involves residue Lys-332. Glu-336 serves as a coordination point for Ca(2+).

This sequence belongs to the annexin family. Homodimer; non-covalently linked. Homodimer; linked by transglutamylation. Homodimers linked by transglutamylation are observed in placenta, but not in other tissues. Interacts with S100A11. Heterotetramer, formed by two molecules each of S100A11 and ANXA1. Interacts with DYSF. Interacts with EGFR. Phosphorylated by protein kinase C, EGFR and TRPM7. Phosphorylated in response to EGF treatment. Post-translationally, sumoylated. In terms of processing, proteolytically cleaved by cathepsin CTSG to release the active N-terminal peptide Ac2-26.

The protein resides in the nucleus. Its subcellular location is the cytoplasm. It localises to the cell projection. It is found in the cilium. The protein localises to the basolateral cell membrane. The protein resides in the lateral cell membrane. Its subcellular location is the cell membrane. It localises to the apical cell membrane. It is found in the membrane. The protein localises to the endosome membrane. The protein resides in the secreted. Its subcellular location is the extracellular space. It localises to the early endosome. It is found in the cytoplasmic vesicle membrane. The protein localises to the extracellular exosome. The protein resides in the cytoplasmic vesicle. Its subcellular location is the secretory vesicle lumen. It localises to the phagocytic cup. In terms of biological role, plays important roles in the innate immune response as effector of glucocorticoid-mediated responses and regulator of the inflammatory process. Has anti-inflammatory activity. Plays a role in glucocorticoid-mediated down-regulation of the early phase of the inflammatory response. Contributes to the adaptive immune response by enhancing signaling cascades that are triggered by T-cell activation, regulates differentiation and proliferation of activated T-cells. Promotes the differentiation of T-cells into Th1 cells and negatively regulates differentiation into Th2 cells. Has no effect on unstimulated T-cells. Negatively regulates hormone exocytosis via activation of the formyl peptide receptors and reorganization of the actin cytoskeleton. Has high affinity for Ca(2+) and can bind up to eight Ca(2+) ions. Displays Ca(2+)-dependent binding to phospholipid membranes. Plays a role in the formation of phagocytic cups and phagosomes. Plays a role in phagocytosis by mediating the Ca(2+)-dependent interaction between phagosomes and the actin cytoskeleton. Its function is as follows. Functions at least in part by activating the formyl peptide receptors and downstream signaling cascades. Promotes chemotaxis of granulocytes and monocytes via activation of the formyl peptide receptors. Promotes rearrangement of the actin cytoskeleton, cell polarization and cell migration. Promotes resolution of inflammation and wound healing. Acts via neutrophil N-formyl peptide receptors to enhance the release of CXCL2. This is Annexin A1 (ANXA1) from Cavia cutleri (Guinea pig).